The primary structure comprises 495 residues: DNA double-strand break repair helicase HerA (495 aa).

Residues R142, 151–156, and 459–460 contribute to the ATP site; these read GSGKSN and KI.

This sequence belongs to the HerA family. In terms of assembly, interacts with Rad50 and Mre11.

It catalyses the reaction Couples ATP hydrolysis with the unwinding of duplex DNA at the replication fork by translocating in the 5'-3' direction. This creates two antiparallel DNA single strands (ssDNA). The leading ssDNA polymer is the template for DNA polymerase III holoenzyme which synthesizes a continuous strand.. The catalysed reaction is ATP + H2O = ADP + phosphate + H(+). It carries out the reaction Couples ATP hydrolysis with the unwinding of duplex DNA by translocating in the 3'-5' direction.. Its activity is regulated as follows. ATPase activity is slightly stimulated by either circular single- or double-stranded (ds)DNA with a weak preference for dsDNA. Involved in DNA double-strand break (DSB) repair. Probably acts with NurA to stimulate resection of the 5' strand and produce the long 3' single-strand that is required for RadA loading. Has DNA-dependent ATPase activity and bidirectional DNA helicase activity. Loads on either a 3' or a 5' DNA tail for subsequent DNA unwinding; has no activity on blunt-end DNA. This is DNA double-strand break repair helicase HerA from Sulfolobus acidocaldarius (strain ATCC 33909 / DSM 639 / JCM 8929 / NBRC 15157 / NCIMB 11770).